Consider the following 1234-residue polypeptide: Chromosome-associated kinesin KIF4B (1234 aa).

Positions 9 to 336 (PVRVALRCRP…LRYADRARKI (328 aa)) constitute a Kinesin motor domain. Position 88–95 (88–95 (GQTGSGKT)) interacts with ATP. Positions 350-999 (ELNHLKQQVQ…IKQKLILLQV (650 aa)) form a coiled coil. Serine 394 carries the phosphoserine modification. Disordered stretches follow at residues 494–513 (EEAQ…AFTT) and 712–737 (KRLK…HGKE). The span at 498-513 (VETSPETSRSSDAFTT) shows a compositional bias: polar residues. Residues 663 to 1234 (QWKQKKDKEV…GCSPIEEEAH (572 aa)) form an interaction with PRC1 region. A compositionally biased stretch (basic and acidic residues) spans 713 to 737 (RLKDALQKQREVTDKRKETQSHGKE). A Nuclear localization signal motif is present at residues 793-798 (PKLRKC). At threonine 799 the chain carries Phosphothreonine. Phosphoserine is present on residues serine 801, serine 951, serine 1001, serine 1013, serine 1017, and serine 1028. Residues 1000–1234 (ASRQKHLPND…GCSPIEEEAH (235 aa)) form a globular region. Disordered stretches follow at residues 1007–1030 (PNDT…PSRV), 1052–1076 (VNEH…KPTK), 1122–1143 (RQQG…GSFK), and 1183–1234 (TAPA…EEAH). Acidic residues predominate over residues 1056–1071 (EDGDGDGDSDEGDDEE). The segment at 1086–1144 (QGCSCKGWCGNKQCGCRKQKSDCGVDCSCDPTKCRNRQQGKDSLGTVEQTQDSEGSFKL) is CRD; required for [4Fe-4S] cluster binding and localization to the spindle midzone and midbody during anaphase and telophase. Serine 1128 is subject to Phosphoserine. Residue threonine 1183 is modified to Phosphothreonine. Serine 1188 bears the Phosphoserine mark. Lysine 1196 is covalently cross-linked (Glycyl lysine isopeptide (Lys-Gly) (interchain with G-Cter in SUMO2)). Phosphoserine is present on serine 1227.

The protein belongs to the TRAFAC class myosin-kinesin ATPase superfamily. Kinesin family. Chromokinesin subfamily. [2Fe-2S] cluster is required as a cofactor. [4Fe-4S] cluster serves as cofactor. In terms of tissue distribution, specifically expressed in testis.

It is found in the nucleus matrix. The protein localises to the cytoplasm. Its subcellular location is the cytoskeleton. Functionally, iron-sulfur (Fe-S) cluster binding motor protein that has a role in chromosome segregation during mitosis. Translocates PRC1 to the plus ends of interdigitating spindle microtubules during the metaphase to anaphase transition, an essential step for the formation of an organized central spindle midzone and midbody and for successful cytokinesis. May play a role in mitotic chromosomal positioning and bipolar spindle stabilization. The polypeptide is Chromosome-associated kinesin KIF4B (KIF4B) (Homo sapiens (Human)).